The primary structure comprises 372 residues: Glutamate 5-kinase (372 aa).

Position 14 (K14) interacts with ATP. Substrate contacts are provided by S54, D141, and N153. 173–174 (TD) is an ATP binding site. The PUA domain occupies 280–358 (RGHVVIDAGA…GEIETVLGYM (79 aa)).

This sequence belongs to the glutamate 5-kinase family.

It localises to the cytoplasm. The catalysed reaction is L-glutamate + ATP = L-glutamyl 5-phosphate + ADP. The protein operates within amino-acid biosynthesis; L-proline biosynthesis; L-glutamate 5-semialdehyde from L-glutamate: step 1/2. Functionally, catalyzes the transfer of a phosphate group to glutamate to form L-glutamate 5-phosphate. The chain is Glutamate 5-kinase from Burkholderia vietnamiensis (strain G4 / LMG 22486) (Burkholderia cepacia (strain R1808)).